Reading from the N-terminus, the 252-residue chain is Serine/threonine phosphatase stp (252 aa).

A disordered region spans residues 1-22; that stretch reads MHAEFRTDRGRIRHHNEDNGGV. Residues 2–242 enclose the PPM-type phosphatase domain; that stretch reads HAEFRTDRGR…DNITVLLVER (241 aa). Mn(2+) contacts are provided by D36, G37, D194, and D233.

The protein belongs to the PP2C family. It depends on Mn(2+) as a cofactor.

It localises to the cytoplasm. Its subcellular location is the membrane. The enzyme catalyses O-phospho-L-seryl-[protein] + H2O = L-seryl-[protein] + phosphate. It carries out the reaction O-phospho-L-threonyl-[protein] + H2O = L-threonyl-[protein] + phosphate. Its function is as follows. Protein phosphatase that dephosphorylates EF-Tu. The chain is Serine/threonine phosphatase stp (stp) from Listeria innocua serovar 6a (strain ATCC BAA-680 / CLIP 11262).